A 428-amino-acid polypeptide reads, in one-letter code: Adenylosuccinate synthetase (428 aa).

Residues 12–18 (GDEGKGK) and 40–42 (GHT) each bind GTP. The Proton acceptor role is filled by Asp-13. Positions 13 and 40 each coordinate Mg(2+). IMP is bound by residues 13 to 16 (DEGK), 38 to 41 (NAGH), Thr-128, Arg-142, Gln-223, Thr-238, and Arg-302. Catalysis depends on His-41, which acts as the Proton donor. A substrate-binding site is contributed by 298-304 (VTTGRPR). GTP contacts are provided by residues Arg-304, 330 to 332 (KLD), and 412 to 414 (GVG).

The protein belongs to the adenylosuccinate synthetase family. As to quaternary structure, homodimer. The cofactor is Mg(2+).

The protein localises to the cytoplasm. The catalysed reaction is IMP + L-aspartate + GTP = N(6)-(1,2-dicarboxyethyl)-AMP + GDP + phosphate + 2 H(+). Its pathway is purine metabolism; AMP biosynthesis via de novo pathway; AMP from IMP: step 1/2. In terms of biological role, plays an important role in the de novo pathway of purine nucleotide biosynthesis. Catalyzes the first committed step in the biosynthesis of AMP from IMP. The sequence is that of Adenylosuccinate synthetase from Halothermothrix orenii (strain H 168 / OCM 544 / DSM 9562).